A 267-amino-acid chain; its full sequence is Probable 6-oxopurine nucleoside phosphorylase (267 aa).

Residues Ser-10, 50-51, and 83-84 contribute to the phosphate site; these read RH and SA. Residue Met-188 coordinates substrate. Thr-189 is a binding site for phosphate. Residue 212–214 participates in substrate binding; the sequence is NYA.

Belongs to the PNP/MTAP phosphorylase family. MTAP subfamily. As to quaternary structure, homohexamer. Dimer of a homotrimer.

The catalysed reaction is a purine D-ribonucleoside + phosphate = a purine nucleobase + alpha-D-ribose 1-phosphate. It carries out the reaction guanosine + phosphate = alpha-D-ribose 1-phosphate + guanine. It catalyses the reaction inosine + phosphate = alpha-D-ribose 1-phosphate + hypoxanthine. The protein operates within purine metabolism; purine nucleoside salvage. Functionally, purine nucleoside phosphorylase which is highly specific for 6-oxopurine nucleosides. Cleaves guanosine or inosine to respective bases and sugar-1-phosphate molecules. Involved in purine salvage. The chain is Probable 6-oxopurine nucleoside phosphorylase from Thermococcus kodakarensis (strain ATCC BAA-918 / JCM 12380 / KOD1) (Pyrococcus kodakaraensis (strain KOD1)).